We begin with the raw amino-acid sequence, 300 residues long: Bifunctional protein FolD 2 (300 aa).

Residues 165–167, S190, and I231 each bind NADP(+); that span reads GRS.

This sequence belongs to the tetrahydrofolate dehydrogenase/cyclohydrolase family. In terms of assembly, homodimer.

It carries out the reaction (6R)-5,10-methylene-5,6,7,8-tetrahydrofolate + NADP(+) = (6R)-5,10-methenyltetrahydrofolate + NADPH. The enzyme catalyses (6R)-5,10-methenyltetrahydrofolate + H2O = (6R)-10-formyltetrahydrofolate + H(+). Its pathway is one-carbon metabolism; tetrahydrofolate interconversion. Functionally, catalyzes the oxidation of 5,10-methylenetetrahydrofolate to 5,10-methenyltetrahydrofolate and then the hydrolysis of 5,10-methenyltetrahydrofolate to 10-formyltetrahydrofolate. This Pseudomonas savastanoi pv. phaseolicola (strain 1448A / Race 6) (Pseudomonas syringae pv. phaseolicola (strain 1448A / Race 6)) protein is Bifunctional protein FolD 2.